Here is a 249-residue protein sequence, read N- to C-terminus: Diaminopimelate epimerase (249 aa).

N11 and N60 together coordinate substrate. C69 serves as the catalytic Proton donor. Substrate contacts are provided by residues 70 to 71 (GN), N164, and 182 to 183 (ER). C192 (proton acceptor) is an active-site residue. A substrate-binding site is contributed by 193-194 (GT).

It belongs to the diaminopimelate epimerase family. Homodimer.

The protein localises to the cytoplasm. The enzyme catalyses (2S,6S)-2,6-diaminopimelate = meso-2,6-diaminopimelate. Its pathway is amino-acid biosynthesis; L-lysine biosynthesis via DAP pathway; DL-2,6-diaminopimelate from LL-2,6-diaminopimelate: step 1/1. Its function is as follows. Catalyzes the stereoinversion of LL-2,6-diaminopimelate (L,L-DAP) to meso-diaminopimelate (meso-DAP), a precursor of L-lysine and an essential component of the bacterial peptidoglycan. This Campylobacter jejuni subsp. jejuni serotype O:23/36 (strain 81-176) protein is Diaminopimelate epimerase.